A 49-amino-acid chain; its full sequence is Delta-actitoxin-Axm1b (49 aa).

The interval 1–7 is well-structured region; sequence GVPCLCD. 3 cysteine pairs are disulfide-bonded: Cys4-Cys46, Cys6-Cys36, and Cys29-Cys47. The segment at 8–17 is arg-14 loop (non-well-structured region); the sequence is SDGPRPRGNT. A well-structured region region spans residues 18 to 49; the sequence is LSGILWFYPSGCPSGWHNCKAHGPNIGWCCKK.

Belongs to the sea anemone sodium channel inhibitory toxin family. Type I subfamily.

It localises to the secreted. The protein localises to the nematocyst. Its function is as follows. Binds specifically to voltage-gated sodium channels (Nav) (site 3), thereby delaying their inactivation. This toxin has the highest affinity of all anemone toxins for the mammalian sodium channel, whereas its paralog Anthopleurin-A retains the greatest capacity to discriminate between cardiac (Nav1.5/SCN5A) and neuronal sodium channels. When tested electrophysiologically, this toxin exhibits a high affinity for multiple sodium channels with a 50-fold preference for rat cardiac (Nav1.5/SCN5A) over neuronal channels (0.1 nM versus 5 nM). When tested by ion flux, the affinities are similar and appear to have higher affinity (9 nM versus 22 nM). The residue Lys-37 of this toxin has been shown to interact with channel Nav1.5 (residue Asp-1612 in rat and Asp-1610 in human), which is located in the DIV S3-S4 linker (corresponding to channel site 3). Selectively modifies sodium channel inactivation from the open state with little effect on channel activation or on inactivation from closed states. Does not display phospholipid-binding activities, suggesting that the domain IV S3-S4 linker is located at the extracellular surface and not buried in the phospholipid bilayer. The polypeptide is Delta-actitoxin-Axm1b (Anthopleura xanthogrammica (Giant green sea anemone)).